The sequence spans 438 residues: Battenin (438 aa).

The disordered stretch occupies residues 1-29; that stretch reads MGGCAGSRRRLLDSEEEETAPEPRPPRSY. The Cytoplasmic segment spans residues 1–37; sequence MGGCAGSRRRLLDSEEEETAPEPRPPRSYHKGALWKN. Position 14 is a phosphoserine (Ser14). The helical transmembrane segment at 38 to 58 threads the bilayer; the sequence is VMGFWLLGLCNNFSYVVMLSA. Residues 59 to 127 lie on the Lumenal side of the membrane; the sequence is AHDILSHQRA…GLHLLPYSPR (69 aa). The disordered stretch occupies residues 68–89; sequence ASGNQSHVDPDPPPTAHNSSSR. 2 N-linked (GlcNAc...) asparagine glycosylation sites follow: Asn71 and Asn85. The helical transmembrane segment at 128-148 threads the bilayer; that stretch reads VLVSGICAAGSFILVAFSHSV. Residues 149–151 lie on the Cytoplasmic side of the membrane; it reads GTS. Residues 152-172 form a helical membrane-spanning segment; it reads LCGVVLASISSGVGEVTFLSL. Over 173 to 182 the chain is Lumenal; that stretch reads TAFYPRAVIS. The chain crosses the membrane as a helical span at residues 183–203; the sequence is WWSSGTGGAGLMGALSYLGLT. At 204 to 277 the chain is on the cytoplasmic side; it reads QAGLSPQHTL…NLSLQERWTV (74 aa). Residues 236 to 267 form a disordered region; sequence PQDPGGEEEAETSARQPLIDSETPESKPDSSS. A Lysosomal targeting motif motif is present at residues 242–244; sequence EEE. The Lysosomal targeting motif. Required for AP1G1, AP2A2 and AP3D1 interaction motif lies at 253–254; the sequence is LI. A helical membrane pass occupies residues 278 to 298; sequence FKGLLWYIVPLVLVYFAEYFI. Over 299–346 the chain is Lumenal; it reads NQGLFELLFFRNTSLNHAQQYRWYQMLYQAGVFVSRSSLHCCRIRFTW. An N-linked (GlcNAc...) asparagine glycan is attached at Asn310. Residues 347–367 form a helical membrane-spanning segment; it reads VLALLQCLNLAFLLVDVWFSF. The Cytoplasmic portion of the chain corresponds to 368–438; it reads LPSIYLVFLI…PLHDFLCHLS (71 aa). The Lysosomal targeting motif motif lies at 409–419; it reads MAAACISDTLG. Cys435 carries the post-translational modification Cysteine methyl ester. Cys435 carries the S-farnesyl cysteine lipid modification. Residues 436–438 constitute a propeptide, removed in mature form; sequence HLS.

This sequence belongs to the battenin family. Interacts with DCTN1, KIF3A, RAB7A and RILP. Interacts with CLN5. Highly glycosylated. Post-translationally, farnesylation is important for trafficking to lysosomes.

Its subcellular location is the lysosome membrane. It is found in the late endosome. The protein localises to the lysosome. Mediates microtubule-dependent, anterograde transport connecting the Golgi network, endosomes, autophagosomes, lysosomes and plasma membrane, and participates in several cellular processes such as regulation of lysosomal pH, lysosome protein degradation, receptor-mediated endocytosis, autophagy, transport of proteins and lipids from the TGN, apoptosis and synaptic transmission. Facilitates the proteins transport from trans-Golgi network (TGN)-to other membrane compartments such as transport of microdomain-associated proteins to the plasma membrane, IGF2R transport to the lysosome where it regulates the CTSD release leading to regulation of CTSD maturation and thereby APP intracellular processing. Moreover regulates CTSD activity in response to osmotic stress. Also binds galactosylceramide and transports it from the trans Golgi to the rafts, which may have immediate and downstream effects on cell survival by modulating ceramide synthesis. At the plasma membrane, regulates actin-dependent events including filopodia formation, cell migration, and pinocytosis through ARF1-CDC42 pathway and also the cytoskeleton organization through interaction with MYH10 and fodrin leading to the regulation of the plasma membrane association of Na+, K+ ATPase complex. Regulates synaptic transmission in the amygdala, hippocampus, and cerebellum through regulation of synaptic vesicles density and their proximity to active zones leading to modulation of short-term plasticity and age-dependent anxious behavior, learning and memory. Regulates autophagic vacuoles (AVs) maturation by modulating the trafficking between endocytic and autophagolysosomal/lysosomal compartments, which involves vesicle fusion leading to regulation of degradation process. Also participates in cellular homeostasis of compounds such as, water, ions, amino acids, proteins and lipids in several tissue namely in brain and kidney through regulation of their transport and synthesis. This Canis lupus familiaris (Dog) protein is Battenin.